Reading from the N-terminus, the 186-residue chain is GMP synthase [glutamine-hydrolyzing] subunit A (186 aa).

The region spanning 3–186 is the Glutamine amidotransferase type-1 domain; the sequence is MILIINNHGQ…FENFYDVCRS (184 aa). The active-site Nucleophile is the C77. Active-site residues include H164 and E166.

Heterodimer composed of a glutamine amidotransferase subunit (A) and a GMP-binding subunit (B).

The enzyme catalyses XMP + L-glutamine + ATP + H2O = GMP + L-glutamate + AMP + diphosphate + 2 H(+). Its pathway is purine metabolism; GMP biosynthesis; GMP from XMP (L-Gln route): step 1/1. In terms of biological role, catalyzes the synthesis of GMP from XMP. This is GMP synthase [glutamine-hydrolyzing] subunit A from Methanothermobacter thermautotrophicus (strain ATCC 29096 / DSM 1053 / JCM 10044 / NBRC 100330 / Delta H) (Methanobacterium thermoautotrophicum).